The following is a 285-amino-acid chain: Ribosomal RNA small subunit methyltransferase I (285 aa).

The protein belongs to the methyltransferase superfamily. RsmI family.

The protein localises to the cytoplasm. The catalysed reaction is cytidine(1402) in 16S rRNA + S-adenosyl-L-methionine = 2'-O-methylcytidine(1402) in 16S rRNA + S-adenosyl-L-homocysteine + H(+). Catalyzes the 2'-O-methylation of the ribose of cytidine 1402 (C1402) in 16S rRNA. The protein is Ribosomal RNA small subunit methyltransferase I of Buchnera aphidicola subsp. Schizaphis graminum (strain Sg).